Here is a 235-residue protein sequence, read N- to C-terminus: PRA1 family protein 1 (235 aa).

A compositionally biased stretch (polar residues) spans 1–17 (MESNSNSNETMYGNPNI). A disordered region spans residues 1–55 (MESNSNSNETMYGNPNINMGFVDSGNSNIGNNTGSMSPPPQQQQQPQQASSTPAG). The span at 24-48 (SGNSNIGNNTGSMSPPPQQQQQPQQ) shows a compositional bias: low complexity. Helical transmembrane passes span 144–164 (SVFF…LLFI) and 187–207 (AFLS…LVGA).

This sequence belongs to the PRA1 family.

The protein resides in the membrane. In terms of biological role, may act as a general Rab protein regulator. The sequence is that of PRA1 family protein 1 (prafA) from Dictyostelium discoideum (Social amoeba).